The sequence spans 223 residues: Deoxyribose-phosphate aldolase (223 aa).

The active-site Proton donor/acceptor is the aspartate 91. The active-site Schiff-base intermediate with acetaldehyde is lysine 153. Lysine 182 (proton donor/acceptor) is an active-site residue.

This sequence belongs to the DeoC/FbaB aldolase family. DeoC type 1 subfamily.

Its subcellular location is the cytoplasm. The catalysed reaction is 2-deoxy-D-ribose 5-phosphate = D-glyceraldehyde 3-phosphate + acetaldehyde. The protein operates within carbohydrate degradation; 2-deoxy-D-ribose 1-phosphate degradation; D-glyceraldehyde 3-phosphate and acetaldehyde from 2-deoxy-alpha-D-ribose 1-phosphate: step 2/2. Catalyzes a reversible aldol reaction between acetaldehyde and D-glyceraldehyde 3-phosphate to generate 2-deoxy-D-ribose 5-phosphate. This Yersinia pestis bv. Antiqua (strain Angola) protein is Deoxyribose-phosphate aldolase.